The primary structure comprises 715 residues: Photosystem I P700 chlorophyll a apoprotein A1 (715 aa).

Transmembrane regions (helical) follow at residues 60 to 83 (VFSA…FHGA), 146 to 169 (LYST…FHYH), 185 to 209 (LNHH…HVSL), 281 to 299 (TVHH…GHMY), 336 to 359 (WHAQ…HHMY), 375 to 401 (LSLF…IFMV), 423 to 445 (AIIS…LYIH), and 521 to 539 (FLVH…LILL). [4Fe-4S] cluster-binding residues include C563 and C572. 2 helical membrane passes run 579-600 (HVFL…HFSW) and 654-676 (LSAY…MFLF). Residue H665 coordinates chlorophyll a'. The chlorophyll a site is built by M673 and Y681. W682 contributes to the phylloquinone binding site. Residues 714-715 (AE) traverse the membrane as a helical segment.

This sequence belongs to the PsaA/PsaB family. In terms of assembly, the PsaA/B heterodimer binds the P700 chlorophyll special pair and subsequent electron acceptors. PSI consists of a core antenna complex that captures photons, and an electron transfer chain that converts photonic excitation into a charge separation. The eukaryotic PSI reaction center is composed of at least 11 subunits. It depends on P700 is a chlorophyll a/chlorophyll a' dimer, A0 is one or more chlorophyll a, A1 is one or both phylloquinones and FX is a shared 4Fe-4S iron-sulfur center. as a cofactor.

Its subcellular location is the plastid. The protein localises to the chloroplast thylakoid membrane. The enzyme catalyses reduced [plastocyanin] + hnu + oxidized [2Fe-2S]-[ferredoxin] = oxidized [plastocyanin] + reduced [2Fe-2S]-[ferredoxin]. Its function is as follows. PsaA and PsaB bind P700, the primary electron donor of photosystem I (PSI), as well as the electron acceptors A0, A1 and FX. PSI is a plastocyanin-ferredoxin oxidoreductase, converting photonic excitation into a charge separation, which transfers an electron from the donor P700 chlorophyll pair to the spectroscopically characterized acceptors A0, A1, FX, FA and FB in turn. Oxidized P700 is reduced on the lumenal side of the thylakoid membrane by plastocyanin. The chain is Photosystem I P700 chlorophyll a apoprotein A1 from Phlegmariurus squarrosus (Rock tassel fern).